The following is a 432-amino-acid chain: Enolase (432 aa).

Residue glutamine 167 coordinates (2R)-2-phosphoglycerate. Glutamate 209 functions as the Proton donor in the catalytic mechanism. Mg(2+) contacts are provided by aspartate 246, glutamate 291, and aspartate 318. (2R)-2-phosphoglycerate is bound by residues lysine 343, arginine 372, serine 373, and lysine 394. The active-site Proton acceptor is the lysine 343.

It belongs to the enolase family. In terms of assembly, component of the RNA degradosome, a multiprotein complex involved in RNA processing and mRNA degradation. Mg(2+) is required as a cofactor.

It is found in the cytoplasm. The protein resides in the secreted. Its subcellular location is the cell surface. It carries out the reaction (2R)-2-phosphoglycerate = phosphoenolpyruvate + H2O. It participates in carbohydrate degradation; glycolysis; pyruvate from D-glyceraldehyde 3-phosphate: step 4/5. Its function is as follows. Catalyzes the reversible conversion of 2-phosphoglycerate (2-PG) into phosphoenolpyruvate (PEP). It is essential for the degradation of carbohydrates via glycolysis. The chain is Enolase from Aliivibrio fischeri (strain ATCC 700601 / ES114) (Vibrio fischeri).